The sequence spans 193 residues: Large ribosomal subunit protein uL5 (193 aa).

This sequence belongs to the universal ribosomal protein uL5 family. Part of the 50S ribosomal subunit; part of the 5S rRNA/L5/L18/L25 subcomplex. Contacts the 5S rRNA and the P site tRNA. Forms a bridge to the 30S subunit in the 70S ribosome.

In terms of biological role, this is one of the proteins that bind and probably mediate the attachment of the 5S RNA into the large ribosomal subunit, where it forms part of the central protuberance. In the 70S ribosome it contacts protein S13 of the 30S subunit (bridge B1b), connecting the 2 subunits; this bridge is implicated in subunit movement. Contacts the P site tRNA; the 5S rRNA and some of its associated proteins might help stabilize positioning of ribosome-bound tRNAs. The protein is Large ribosomal subunit protein uL5 of Renibacterium salmoninarum (strain ATCC 33209 / DSM 20767 / JCM 11484 / NBRC 15589 / NCIMB 2235).